A 420-amino-acid polypeptide reads, in one-letter code: UDP-N-acetylglucosamine 1-carboxyvinyltransferase (420 aa).

Position 22–23 (22–23 (KN)) interacts with phosphoenolpyruvate. Position 93 (Arg93) interacts with UDP-N-acetyl-alpha-D-glucosamine. Cys117 serves as the catalytic Proton donor. A 2-(S-cysteinyl)pyruvic acid O-phosphothioketal modification is found at Cys117. UDP-N-acetyl-alpha-D-glucosamine is bound by residues Asp307 and Val329.

The protein belongs to the EPSP synthase family. MurA subfamily.

Its subcellular location is the cytoplasm. It catalyses the reaction phosphoenolpyruvate + UDP-N-acetyl-alpha-D-glucosamine = UDP-N-acetyl-3-O-(1-carboxyvinyl)-alpha-D-glucosamine + phosphate. Its pathway is cell wall biogenesis; peptidoglycan biosynthesis. Cell wall formation. Adds enolpyruvyl to UDP-N-acetylglucosamine. The chain is UDP-N-acetylglucosamine 1-carboxyvinyltransferase from Marinobacter nauticus (strain ATCC 700491 / DSM 11845 / VT8) (Marinobacter aquaeolei).